We begin with the raw amino-acid sequence, 180 residues long: High mobility group protein B1 (180 aa).

A Nuclear localization signal (NLS) 1 motif is present at residues 1 to 8 (VNFSEFSK). The segment at residues 1-44 (VNFSEFSKKCSERWKTMSAKEKGKFEDMAKADKARYEREMKTYI) is a DNA-binding region (HMG box 1). N6-acetyllysine is present on lysine 8. Isoglutamyl lysine isopeptide (Lys-Gln) (interchain with Q-?) cross-links involve residues lysine 8 and lysine 9. Cysteine 10 carries the post-translational modification Cysteine sulfonic acid (-SO3H). Lysine 33 participates in a covalent cross-link: Isoglutamyl lysine isopeptide (Lys-Gln) (interchain with Q-?). Residues 45–61 (PPKGETKKKFKDPNAPK) form an LPS binding (Lipid A) region. A cytokine-stimulating activity region spans residues 54 to 73 (FKDPNAPKRPPSAFFLFCSE). An N6-acetyllysine modification is found at lysine 55. The segment at residues 60–128 (PKRPPSAFFL…KYEKDIAAYR (69 aa)) is a DNA-binding region (HMG box 2). Serine 65 carries the phosphoserine modification. Cysteine 71 is modified (cysteine sulfonic acid (-SO3H)). Lysine 92, lysine 93, lysine 106, lysine 137, lysine 138, lysine 142, and lysine 145 each carry N6-acetyllysine. The tract at residues 115–148 (KLKEKYEKDIAAYRAKGKPDAAKKGVVKAEKSKK) is binding to AGER/RAGE. Positions 126 to 144 (AYRAKGKPDAAKKGVVKAE) are enriched in basic and acidic residues. The disordered stretch occupies residues 126-180 (AYRAKGKPDAAKKGVVKAEKSKKKKEEEDDEEDEEDEEEEEEEEDEDEEEDDDDE). The Nuclear localization signal (NLS) 2 motif lies at 143–149 (AEKSKKK). Residues 143 to 149 (AEKSKKK) form an NLS 2 region. Lysine 145 participates in a covalent cross-link: Isoglutamyl lysine isopeptide (Lys-Gln) (interchain with Q-?). Serine 146 bears the ADP-ribosylserine mark. N6-acetyllysine is present on residues lysine 147, lysine 148, lysine 149, and lysine 150. Residues lysine 147, lysine 148, and lysine 149 each participate in an isoglutamyl lysine isopeptide (Lys-Gln) (interchain with Q-?) cross-link. Positions 152–180 (EEDDEEDEEDEEEEEEEEDEDEEEDDDDE) are enriched in acidic residues.

The protein belongs to the HMGB family. As to quaternary structure, interacts (fully reduced HMGB1) with CXCL12; probably in a 1:2 ratio involving two molecules of CXCL12, each interacting with one HMG box of HMGB1; inhibited by glycyrrhizin. Associates with the TLR4:LY96 receptor complex. Component of the RAG complex composed of core components RAG1 and RAG2, and associated component HMGB1 or HMGB2. Interacts (in cytoplasm upon starvation) with BECN1; inhibits the interaction of BECN1 and BCL2 leading to promotion of autophagy. Interacts with KPNA1; involved in nuclear import. Interacts with SREBF1, TLR2, TLR4, TLR9, PTPRZ1, APEX1, FEN1, POLB, TERT. Interacts with IL1B, AGER, MSH2, XPA, XPC, HNF1A, TP53. Interacts with CD24; the probable CD24:SIGLEC10 complex is proposed to inhibit HGMB1-mediated tissue damage immune response. Interacts with THBD; prevents HGMB1 interaction with ACER/RAGE and inhibits HGMB1 pro-inflammatory activity. Interacts with HAVCR2; impairs HMGB1 binding to B-DNA and likely HMGB1-mediated innate immune response. Interacts with XPO1; mediating nuclear export. Interacts with receptor RAGE/AGER. Phosphorylated at serine residues. Phosphorylation in both NLS regions is required for cytoplasmic translocation followed by secretion. Post-translationally, acetylated on multiple sites upon stimulation with LPS. Acetylation on lysine residues in the nuclear localization signals (NLS 1 and NLS 2) leads to cytoplasmic localization and subsequent secretion. In terms of processing, reduction/oxidation of cysteine residues and a possible intramolecular disulfide bond give rise to different redox forms with specific functional activities in various cellular compartments: 1- fully reduced HMGB1 (HMGB1C23hC45hC106h), 2-disulfide HMGB1 (HMGB1C23-C45C106h) and 3- sulfonyl HMGB1 (HMGB1C23soC45soC106so). Poly-ADP-ribosylated by PARP1 when secreted following stimulation with LPS. Post-translationally, in vitro cleavage by CASP1 is liberating a HMG box 1-containing peptide which may mediate immunogenic activity; the peptide antagonizes apoptosis-induced immune tolerance. Can be proteolytically cleaved by a thrombin:thrombomodulin complex; reduces binding to heparin and pro-inflammatory activities. In terms of processing, forms covalent cross-links mediated by transglutaminase TGM2, between a glutamine and the epsilon-amino group of a lysine residue, forming homopolymers and heteropolymers.

The protein localises to the nucleus. Its subcellular location is the chromosome. It localises to the cytoplasm. The protein resides in the secreted. It is found in the cell membrane. The protein localises to the endosome. Its subcellular location is the endoplasmic reticulum-Golgi intermediate compartment. Functionally, multifunctional redox sensitive protein with various roles in different cellular compartments. In the nucleus is one of the major chromatin-associated non-histone proteins and acts as a DNA chaperone involved in replication, transcription, chromatin remodeling, V(D)J recombination, DNA repair and genome stability. Proposed to be an universal biosensor for nucleic acids. Promotes host inflammatory response to sterile and infectious signals and is involved in the coordination and integration of innate and adaptive immune responses. In the cytoplasm functions as a sensor and/or chaperone for immunogenic nucleic acids implicating the activation of TLR9-mediated immune responses, and mediates autophagy. Acts as a danger-associated molecular pattern (DAMP) molecule that amplifies immune responses during tissue injury. Released to the extracellular environment can bind DNA, nucleosomes, IL-1 beta, CXCL12, AGER isoform 2/sRAGE, lipopolysaccharide (LPS) and lipoteichoic acid (LTA), and activates cells through engagement of multiple surface receptors. In the extracellular compartment fully reduced HMGB1 (released by necrosis) acts as a chemokine, disulfide HMGB1 (actively secreted) as a cytokine, and sulfonyl HMGB1 (released from apoptotic cells) promotes immunological tolerance. Has proangiogenic activity. May be involved in platelet activation. Binds to phosphatidylserine and phosphatidylethanolamide. Bound to RAGE mediates signaling for neuronal outgrowth. May play a role in accumulation of expanded polyglutamine (polyQ) proteins. Its function is as follows. Nuclear functions are attributed to fully reduced HGMB1. Associates with chromatin and binds DNA with a preference to non-canonical DNA structures such as single-stranded DNA, DNA-containing cruciforms or bent structures, supercoiled DNA and ZDNA. Can bent DNA and enhance DNA flexibility by looping thus providing a mechanism to promote activities on various gene promoters by enhancing transcription factor binding and/or bringing distant regulatory sequences into close proximity. May be involved in nucleotide excision repair (NER), mismatch repair (MMR) and base excision repair (BER) pathways, and double strand break repair such as non-homologous end joining (NHEJ). Involved in V(D)J recombination by acting as a cofactor of the RAG complex: acts by stimulating cleavage and RAG protein binding at the 23 bp spacer of conserved recombination signal sequences (RSS). In vitro can displace histone H1 from highly bent DNA. Can restructure the canonical nucleosome leading to relaxation of structural constraints for transcription factor-binding. Enhances binding of sterol regulatory element-binding proteins (SREBPs) such as SREBF1 to their cognate DNA sequences and increases their transcriptional activities. Facilitates binding of TP53 to DNA. May be involved in mitochondrial quality control and autophagy in a transcription-dependent fashion implicating HSPB1. Can modulate the activity of the telomerase complex and may be involved in telomere maintenance. In the cytoplasm proposed to dissociate the BECN1:BCL2 complex via competitive interaction with BECN1 leading to autophagy activation. Can protect BECN1 and ATG5 from calpain-mediated cleavage and thus proposed to control their proautophagic and proapoptotic functions and to regulate the extent and severity of inflammation-associated cellular injury. In myeloid cells has a protective role against endotoxemia and bacterial infection by promoting autophagy. Involved in endosomal translocation and activation of TLR9 in response to CpG-DNA in macrophages. In terms of biological role, in the extracellular compartment (following either active secretion or passive release) involved in regulation of the inflammatory response. Fully reduced HGMB1 (which subsequently gets oxidized after release) in association with CXCL12 mediates the recruitment of inflammatory cells during the initial phase of tissue injury; the CXCL12:HMGB1 complex triggers CXCR4 homodimerization. Induces the migration of monocyte-derived immature dendritic cells and seems to regulate adhesive and migratory functions of neutrophils implicating AGER/RAGE and ITGAM. Can bind to various types of DNA and RNA including microbial unmethylated CpG-DNA to enhance the innate immune response to nucleic acids. Proposed to act in promiscuous DNA/RNA sensing which cooperates with subsequent discriminative sensing by specific pattern recognition receptors. Promotes extracellular DNA-induced AIM2 inflammasome activation implicating AGER/RAGE. Disulfide HMGB1 binds to transmembrane receptors, such as AGER/RAGE, TLR2, TLR4 and probably TREM1, thus activating their signal transduction pathways. Mediates the release of cytokines/chemokines such as TNF, IL-1, IL-6, IL-8, CCL2, CCL3, CCL4 and CXCL10. Promotes secretion of interferon-gamma by macrophage-stimulated natural killer (NK) cells in concert with other cytokines like IL-2 or IL-12. TLR4 is proposed to be the primary receptor promoting macrophage activation and signaling through TLR4 seems to implicate LY96/MD-2. In bacterial LPS- or LTA-mediated inflammatory responses binds to the endotoxins and transfers them to CD14 for signaling to the respective TLR4:LY96 and TLR2 complexes. Contributes to tumor proliferation by association with ACER/RAGE. Can bind to IL1-beta and signals through the IL1R1:IL1RAP receptor complex. Binding to class A CpG activates cytokine production in plasmacytoid dendritic cells implicating TLR9, MYD88 and AGER/RAGE and can activate autoreactive B cells. Via HMGB1-containing chromatin immune complexes may also promote B cell responses to endogenous TLR9 ligands through a B-cell receptor (BCR)-dependent and ACER/RAGE-independent mechanism. Inhibits phagocytosis of apoptotic cells by macrophages; the function is dependent on poly-ADP-ribosylation and involves binding to phosphatidylserine on the cell surface of apoptotic cells. In adaptive immunity may be involved in enhancing immunity through activation of effector T-cells and suppression of regulatory T (TReg) cells. In contrast, without implicating effector or regulatory T-cells, required for tumor infiltration and activation of T-cells expressing the lymphotoxin LTA:LTB heterotrimer thus promoting tumor malignant progression. Also reported to limit proliferation of T-cells. Released HMGB1:nucleosome complexes formed during apoptosis can signal through TLR2 to induce cytokine production. Involved in induction of immunological tolerance by apoptotic cells; its pro-inflammatory activities when released by apoptotic cells are neutralized by reactive oxygen species (ROS)-dependent oxidation specifically on Cys-106. During macrophage activation by activated lymphocyte-derived self apoptotic DNA (ALD-DNA) promotes recruitment of ALD-DNA to endosomes. This chain is High mobility group protein B1 (HMGB1), found in Cricetulus griseus (Chinese hamster).